Reading from the N-terminus, the 298-residue chain is Tyrosine recombinase XerC (298 aa).

The Core-binding (CB) domain maps to 2–88 (TDLHTDVERY…ALRSFFDWLV (87 aa)). The Tyr recombinase domain occupies 109–288 (HLPKNIDVDD…DFQHLASVYD (180 aa)). Residues Arg-148, Lys-172, His-240, Arg-243, and His-266 contribute to the active site. Tyr-275 (O-(3'-phospho-DNA)-tyrosine intermediate) is an active-site residue.

The protein belongs to the 'phage' integrase family. XerC subfamily. Forms a cyclic heterotetrameric complex composed of two molecules of XerC and two molecules of XerD, in which XerC interacts with XerD via its C-terminal region, XerD interacts with XerC via its C-terminal region and so on.

The protein resides in the cytoplasm. FtsK may regulate the catalytic switch between XerC and XerD in the heterotetrameric complex during the two steps of the recombination process. Site-specific tyrosine recombinase, which acts by catalyzing the cutting and rejoining of the recombining DNA molecules. Binds cooperatively to specific DNA consensus sequences that are separated from XerD binding sites by a short central region, forming the heterotetrameric XerC-XerD complex that recombines DNA substrates. The complex is essential to convert dimers of the bacterial chromosome into monomers to permit their segregation at cell division. It also contributes to the segregational stability of plasmids. In the complex XerC specifically exchanges the top DNA strands. The protein is Tyrosine recombinase XerC of Escherichia coli O127:H6 (strain E2348/69 / EPEC).